The following is a 514-amino-acid chain: Protein phosphatase 1H (514 aa).

S7 bears the Phosphoserine mark. In terms of domain architecture, PPM-type phosphatase spans 77 to 507 (ATGYAEVINA…DDISVYVIPL (431 aa)). Residues 109-135 (AVTSTPNRNSSKRRSSLPNGEGLQLKE) form a disordered region. Phosphothreonine is present on T113. 2 positions are modified to phosphoserine: S124 and S211. Position 213 is an omega-N-methylarginine (R213). Residue S221 is modified to Phosphoserine. A Phosphothreonine modification is found at T224. Residue S422 is modified to Phosphoserine.

This sequence belongs to the PP2C family.

The protein localises to the nucleus. The protein resides in the cytoplasm. It catalyses the reaction O-phospho-L-seryl-[protein] + H2O = L-seryl-[protein] + phosphate. It carries out the reaction O-phospho-L-threonyl-[protein] + H2O = L-threonyl-[protein] + phosphate. Dephosphorylates CDKN1B at 'Thr-187', thus removing a signal for proteasomal degradation. The protein is Protein phosphatase 1H (PPM1H) of Homo sapiens (Human).